A 308-amino-acid chain; its full sequence is Mycothiol acetyltransferase (308 aa).

The interval 1–20 (MTSDDTAQPSGARRIETRPD) is disordered. N-acetyltransferase domains follow at residues 15–152 (IETR…RSLT) and 165–308 (VTVR…RSET). Residue E47 coordinates 1D-myo-inositol 2-(L-cysteinylamino)-2-deoxy-alpha-D-glucopyranoside. 91 to 93 (LVV) is an acetyl-CoA binding site. Residues E192, K231, and E240 each coordinate 1D-myo-inositol 2-(L-cysteinylamino)-2-deoxy-alpha-D-glucopyranoside. Acetyl-CoA-binding positions include 244–246 (VGV) and 251–257 (QGGGLGK). Position 278 (Y278) interacts with 1D-myo-inositol 2-(L-cysteinylamino)-2-deoxy-alpha-D-glucopyranoside.

This sequence belongs to the acetyltransferase family. MshD subfamily. As to quaternary structure, monomer.

The catalysed reaction is 1D-myo-inositol 2-(L-cysteinylamino)-2-deoxy-alpha-D-glucopyranoside + acetyl-CoA = mycothiol + CoA + H(+). In terms of biological role, catalyzes the transfer of acetyl from acetyl-CoA to desacetylmycothiol (Cys-GlcN-Ins) to form mycothiol. This is Mycothiol acetyltransferase from Streptomyces scabiei (strain 87.22).